Consider the following 86-residue polypeptide: Photosystem I reaction center subunit PsaK (86 aa).

A run of 2 helical transmembrane segments spans residues 14–34 (LQWSPTVGLIIIIANIIAIAF) and 57–77 (FGLPALLATTAFGHILGVGAV).

Belongs to the PsaG/PsaK family.

The protein localises to the cellular thylakoid membrane. The protein is Photosystem I reaction center subunit PsaK of Nostoc punctiforme (strain ATCC 29133 / PCC 73102).